Consider the following 217-residue polypeptide: Thymidylate kinase (217 aa).

7–14 (GIEGAGKS) contributes to the ATP binding site.

This sequence belongs to the thymidylate kinase family.

It carries out the reaction dTMP + ATP = dTDP + ADP. Functionally, phosphorylation of dTMP to form dTDP in both de novo and salvage pathways of dTTP synthesis. This chain is Thymidylate kinase, found in Desulfovibrio desulfuricans (strain ATCC 27774 / DSM 6949 / MB).